The primary structure comprises 403 residues: S-adenosylmethionine:tRNA ribosyltransferase-isomerase (403 aa).

This sequence belongs to the QueA family. Monomer.

The protein localises to the cytoplasm. It carries out the reaction 7-aminomethyl-7-carbaguanosine(34) in tRNA + S-adenosyl-L-methionine = epoxyqueuosine(34) in tRNA + adenine + L-methionine + 2 H(+). It participates in tRNA modification; tRNA-queuosine biosynthesis. In terms of biological role, transfers and isomerizes the ribose moiety from AdoMet to the 7-aminomethyl group of 7-deazaguanine (preQ1-tRNA) to give epoxyqueuosine (oQ-tRNA). The polypeptide is S-adenosylmethionine:tRNA ribosyltransferase-isomerase (Psychrobacter arcticus (strain DSM 17307 / VKM B-2377 / 273-4)).